A 203-amino-acid chain; its full sequence is Peptidyl-tRNA hydrolase (203 aa).

Y18 is a tRNA binding site. H23 (proton acceptor) is an active-site residue. TRNA is bound by residues Y69, N71, and N117.

It belongs to the PTH family. As to quaternary structure, monomer.

The protein localises to the cytoplasm. It carries out the reaction an N-acyl-L-alpha-aminoacyl-tRNA + H2O = an N-acyl-L-amino acid + a tRNA + H(+). Hydrolyzes ribosome-free peptidyl-tRNAs (with 1 or more amino acids incorporated), which drop off the ribosome during protein synthesis, or as a result of ribosome stalling. Functionally, catalyzes the release of premature peptidyl moieties from peptidyl-tRNA molecules trapped in stalled 50S ribosomal subunits, and thus maintains levels of free tRNAs and 50S ribosomes. This chain is Peptidyl-tRNA hydrolase, found in Parasynechococcus marenigrum (strain WH8102).